Reading from the N-terminus, the 435-residue chain is CBL-interacting protein kinase 28 (435 aa).

Residues 11–265 (YVIGRQLGQG…ISRIKRSAWY (255 aa)) form the Protein kinase domain. ATP is bound by residues 17–25 (LGQGTFGKV) and K40. D133 serves as the catalytic Proton acceptor. The activation loop stretch occupies residues 151-180 (DFGLSALAESRRQDGLLHTACGTPAYVAPE). The region spanning 283–329 (CTSEAPFSGPTICISSERNQEPPNLHNLNAFDIISLSTGFDLSGLFG) is the NAF domain. The segment at 334–363 (RRESLFTSRKPAAAVLVKLKELAKALNLKV) is PPI.

This sequence belongs to the protein kinase superfamily. CAMK Ser/Thr protein kinase family. SNF1 subfamily. Mn(2+) is required as a cofactor.

It carries out the reaction L-seryl-[protein] + ATP = O-phospho-L-seryl-[protein] + ADP + H(+). It catalyses the reaction L-threonyl-[protein] + ATP = O-phospho-L-threonyl-[protein] + ADP + H(+). CIPK serine-threonine protein kinases interact with CBL proteins. Binding of a CBL protein to the regulatory NAF domain of CIPK protein lead to the activation of the kinase in a calcium-dependent manner. The polypeptide is CBL-interacting protein kinase 28 (CIPK28) (Oryza sativa subsp. japonica (Rice)).